The following is a 267-amino-acid chain: MRILVEIAYQGNQFLGFQIQQQGRTVQQQFEKILKRMHKHHVRIHPSSRTDRGVHAYQQFFHFDTELNIDNKQWQYAMNRALPDDIYVKNVRNVDEYFHCRYDCVGKRYRYKVYQGNHRNPFKSGTETFVNETLDYDKMNKAAQEFIGTHDFTGFCSQKTEVESKVRTLYQSEIVATKEGFDYVVTGSGFLYNMVRVLVAFLIEVGKGKREPNDVPKLLEDKNRNNVPLTAPPDGLYLEKIYLSPEELIQEYGKDVKIHYKKSLEKH.

Residue Asp51 is the Nucleophile of the active site. Residue Tyr109 participates in substrate binding.

This sequence belongs to the tRNA pseudouridine synthase TruA family. As to quaternary structure, homodimer.

It carries out the reaction uridine(38/39/40) in tRNA = pseudouridine(38/39/40) in tRNA. Its function is as follows. Formation of pseudouridine at positions 38, 39 and 40 in the anticodon stem and loop of transfer RNAs. The polypeptide is tRNA pseudouridine synthase A (Staphylococcus epidermidis (strain ATCC 35984 / DSM 28319 / BCRC 17069 / CCUG 31568 / BM 3577 / RP62A)).